Reading from the N-terminus, the 407-residue chain is Histone acetyltransferase mst2 (407 aa).

Positions 98–372 constitute an MYST-type HAT domain; the sequence is PQPTSIRYLY…VNPKLLRWTP (275 aa). The C2HC MYST-type zinc finger occupies 131 to 156; sequence LYICESCLKYMNSDHVLQRHKMKCSW. Lys-198 is subject to N6-acetyllysine; by autocatalysis. Residues 241–243, Thr-243, and 248–254 contribute to the acetyl-CoA site; these read ILT and QRRGYGV. The active-site Proton donor/acceptor is Glu-274. Ser-278 and Ser-287 together coordinate acetyl-CoA.

Belongs to the MYST (SAS/MOZ) family. In terms of assembly, component of the mst2 complex composed of at least eaf6, mst2, nto1, pdp3, ptf1, ptf2 and tfg3. Post-translationally, autoacetylation at Lys-198 is required for proper function.

It is found in the cytoplasm. It localises to the nucleus. The enzyme catalyses L-lysyl-[protein] + acetyl-CoA = N(6)-acetyl-L-lysyl-[protein] + CoA + H(+). Component of the mst2 complex which is a highly specific H3 lysine 14 (H3K14) acetyltransferase that functions together with gcn5 to regulate global levels of H3K14 acetylation (H3K14ac), critical for DNA damage checkpoint activation. Negatively regulates telomere silencing. Telomere silencing is increased due to histone hypoacetylation and/or an increase in the ratio of methylated histones to acetylated histones. Telomeric histone acetylation contributes to normal meiotic progression. This is Histone acetyltransferase mst2 (mst2) from Schizosaccharomyces pombe (strain 972 / ATCC 24843) (Fission yeast).